The following is a 222-amino-acid chain: Ribosomal RNA small subunit methyltransferase G (222 aa).

S-adenosyl-L-methionine contacts are provided by residues G73, L78, 124 to 125, and R137; that span reads AE.

This sequence belongs to the methyltransferase superfamily. RNA methyltransferase RsmG family.

It is found in the cytoplasm. Specifically methylates the N7 position of guanine in position 518 of 16S rRNA. This Acidothermus cellulolyticus (strain ATCC 43068 / DSM 8971 / 11B) protein is Ribosomal RNA small subunit methyltransferase G.